The following is a 378-amino-acid chain: Alanine racemase (378 aa).

K40 (proton acceptor; specific for D-alanine) is an active-site residue. K40 carries the N6-(pyridoxal phosphate)lysine modification. Residue R140 participates in substrate binding. The active-site Proton acceptor; specific for L-alanine is the Y270. M317 provides a ligand contact to substrate.

The protein belongs to the alanine racemase family. Pyridoxal 5'-phosphate serves as cofactor.

It carries out the reaction L-alanine = D-alanine. It participates in amino-acid biosynthesis; D-alanine biosynthesis; D-alanine from L-alanine: step 1/1. Functionally, catalyzes the interconversion of L-alanine and D-alanine. May also act on other amino acids. The chain is Alanine racemase (alr) from Lacticaseibacillus paracasei (strain ATCC 334 / BCRC 17002 / CCUG 31169 / CIP 107868 / KCTC 3260 / NRRL B-441) (Lactobacillus paracasei).